The sequence spans 185 residues: Ribosome-recycling factor (185 aa).

This sequence belongs to the RRF family.

It localises to the cytoplasm. Responsible for the release of ribosomes from messenger RNA at the termination of protein biosynthesis. May increase the efficiency of translation by recycling ribosomes from one round of translation to another. This chain is Ribosome-recycling factor, found in Beutenbergia cavernae (strain ATCC BAA-8 / DSM 12333 / CCUG 43141 / JCM 11478 / NBRC 16432 / NCIMB 13614 / HKI 0122).